A 178-amino-acid polypeptide reads, in one-letter code: ATP-dependent protease subunit HslV (178 aa).

The active site involves Thr7. The Na(+) site is built by Gly162, Cys165, and Thr168.

The protein belongs to the peptidase T1B family. HslV subfamily. A double ring-shaped homohexamer of HslV is capped on each side by a ring-shaped HslU homohexamer. The assembly of the HslU/HslV complex is dependent on binding of ATP.

The protein resides in the cytoplasm. It carries out the reaction ATP-dependent cleavage of peptide bonds with broad specificity.. Allosterically activated by HslU binding. Its function is as follows. Protease subunit of a proteasome-like degradation complex believed to be a general protein degrading machinery. In Ralstonia nicotianae (strain ATCC BAA-1114 / GMI1000) (Ralstonia solanacearum), this protein is ATP-dependent protease subunit HslV.